The primary structure comprises 399 residues: Acetate kinase (399 aa).

Asparagine 8 lines the Mg(2+) pocket. ATP is bound at residue lysine 15. Arginine 89 is a binding site for substrate. Aspartate 146 functions as the Proton donor/acceptor in the catalytic mechanism. Residues 206 to 210 (HVGNG), 283 to 285 (DMR), and 331 to 335 (GMGEN) each bind ATP. Glutamate 383 contacts Mg(2+).

This sequence belongs to the acetokinase family. In terms of assembly, homodimer. The cofactor is Mg(2+). Mn(2+) serves as cofactor.

The protein resides in the cytoplasm. It catalyses the reaction acetate + ATP = acetyl phosphate + ADP. It functions in the pathway metabolic intermediate biosynthesis; acetyl-CoA biosynthesis; acetyl-CoA from acetate: step 1/2. Its function is as follows. Catalyzes the formation of acetyl phosphate from acetate and ATP. Can also catalyze the reverse reaction. In Streptococcus equi subsp. equi (strain 4047), this protein is Acetate kinase.